The sequence spans 333 residues: Glycerol-3-phosphate dehydrogenase [NAD(P)+] (333 aa).

Residues Trp11, Arg34, and Lys107 each coordinate NADPH. Lys107, Gly136, and Ser138 together coordinate sn-glycerol 3-phosphate. Ala140 serves as a coordination point for NADPH. Residues Lys191, Asp244, Ser254, Arg255, and Asn256 each contribute to the sn-glycerol 3-phosphate site. Residue Lys191 is the Proton acceptor of the active site. Arg255 is an NADPH binding site. NADPH is bound by residues Ile279 and Glu281.

The protein belongs to the NAD-dependent glycerol-3-phosphate dehydrogenase family.

The protein localises to the cytoplasm. It catalyses the reaction sn-glycerol 3-phosphate + NAD(+) = dihydroxyacetone phosphate + NADH + H(+). The catalysed reaction is sn-glycerol 3-phosphate + NADP(+) = dihydroxyacetone phosphate + NADPH + H(+). It participates in membrane lipid metabolism; glycerophospholipid metabolism. Its function is as follows. Catalyzes the reduction of the glycolytic intermediate dihydroxyacetone phosphate (DHAP) to sn-glycerol 3-phosphate (G3P), the key precursor for phospholipid synthesis. The protein is Glycerol-3-phosphate dehydrogenase [NAD(P)+] of Nitrosospira multiformis (strain ATCC 25196 / NCIMB 11849 / C 71).